Reading from the N-terminus, the 203-residue chain is Probable nicotinate-nucleotide adenylyltransferase (203 aa).

This sequence belongs to the NadD family.

It carries out the reaction nicotinate beta-D-ribonucleotide + ATP + H(+) = deamido-NAD(+) + diphosphate. Its pathway is cofactor biosynthesis; NAD(+) biosynthesis; deamido-NAD(+) from nicotinate D-ribonucleotide: step 1/1. In terms of biological role, catalyzes the reversible adenylation of nicotinate mononucleotide (NaMN) to nicotinic acid adenine dinucleotide (NaAD). In Clostridium kluyveri (strain ATCC 8527 / DSM 555 / NBRC 12016 / NCIMB 10680 / K1), this protein is Probable nicotinate-nucleotide adenylyltransferase.